Reading from the N-terminus, the 145-residue chain is Large ribosomal subunit protein uL15 (145 aa).

Positions Met1–Glu50 are disordered. Gly residues predominate over residues Arg20 to Ser30.

This sequence belongs to the universal ribosomal protein uL15 family. As to quaternary structure, part of the 50S ribosomal subunit.

Functionally, binds to the 23S rRNA. The sequence is that of Large ribosomal subunit protein uL15 from Phytoplasma australiense.